The chain runs to 111 residues: Cytochrome c (111 aa).

Residue Ala-1 is modified to N-acetylalanine. Residues Cys-22, Cys-25, and His-26 each contribute to the heme c site. An N6,N6,N6-trimethyllysine modification is found at Lys-80. Met-88 is a heme c binding site. Lys-94 carries the N6,N6,N6-trimethyllysine modification.

This sequence belongs to the cytochrome c family. In terms of processing, binds 1 heme c group covalently per subunit.

It localises to the mitochondrion intermembrane space. Its function is as follows. Electron carrier protein. The oxidized form of the cytochrome c heme group can accept an electron from the heme group of the cytochrome c1 subunit of cytochrome reductase. Cytochrome c then transfers this electron to the cytochrome oxidase complex, the final protein carrier in the mitochondrial electron-transport chain. The polypeptide is Cytochrome c (Brassica napus (Rape)).